The chain runs to 166 residues: Phosphopantetheine adenylyltransferase (166 aa).

S8 provides a ligand contact to substrate. ATP contacts are provided by residues 8-9 (SF) and H16. Substrate contacts are provided by K40, T72, and R86. ATP contacts are provided by residues 87–89 (GLR), E97, and 122–128 (YSFLSSS).

Belongs to the bacterial CoaD family. Homohexamer. Requires Mg(2+) as cofactor.

The protein localises to the cytoplasm. The catalysed reaction is (R)-4'-phosphopantetheine + ATP + H(+) = 3'-dephospho-CoA + diphosphate. Its pathway is cofactor biosynthesis; coenzyme A biosynthesis; CoA from (R)-pantothenate: step 4/5. Reversibly transfers an adenylyl group from ATP to 4'-phosphopantetheine, yielding dephospho-CoA (dPCoA) and pyrophosphate. The protein is Phosphopantetheine adenylyltransferase of Synechococcus elongatus (strain ATCC 33912 / PCC 7942 / FACHB-805) (Anacystis nidulans R2).